Reading from the N-terminus, the 324-residue chain is Glyoxylate/hydroxypyruvate reductase B (324 aa).

Catalysis depends on residues Arg237 and Glu266. His285 acts as the Proton donor in catalysis.

The protein belongs to the D-isomer specific 2-hydroxyacid dehydrogenase family. GhrB subfamily. In terms of assembly, homodimer.

The protein localises to the cytoplasm. The catalysed reaction is glycolate + NADP(+) = glyoxylate + NADPH + H(+). The enzyme catalyses (R)-glycerate + NAD(+) = 3-hydroxypyruvate + NADH + H(+). It carries out the reaction (R)-glycerate + NADP(+) = 3-hydroxypyruvate + NADPH + H(+). Its function is as follows. Catalyzes the NADPH-dependent reduction of glyoxylate and hydroxypyruvate into glycolate and glycerate, respectively. This is Glyoxylate/hydroxypyruvate reductase B from Escherichia coli (strain ATCC 8739 / DSM 1576 / NBRC 3972 / NCIMB 8545 / WDCM 00012 / Crooks).